Consider the following 663-residue polypeptide: UvrABC system protein B (663 aa).

Positions 1 to 10 (MIDKRDDKPF) are enriched in basic and acidic residues. Residues 1-23 (MIDKRDDKPFKLKSKYKPSGDQP) form a disordered region. Residues 31–418 (DNIEGGEKAQ…TNTIIEQIIR (388 aa)) form the Helicase ATP-binding domain. Residue 44-51 (GATGTGKT) participates in ATP binding. A Beta-hairpin motif is present at residues 97-120 (YYDYYQPEAYVPSSDTYIEKDSSV). Residues 435-597 (QMDDLLGEIN…IVPQTIKKDI (163 aa)) form the Helicase C-terminal domain. The region spanning 627-662 (KEAINALQKQMQEAAELLDFELAAQMRDLILELKLM) is the UVR domain.

This sequence belongs to the UvrB family. Forms a heterotetramer with UvrA during the search for lesions. Interacts with UvrC in an incision complex.

The protein resides in the cytoplasm. In terms of biological role, the UvrABC repair system catalyzes the recognition and processing of DNA lesions. A damage recognition complex composed of 2 UvrA and 2 UvrB subunits scans DNA for abnormalities. Upon binding of the UvrA(2)B(2) complex to a putative damaged site, the DNA wraps around one UvrB monomer. DNA wrap is dependent on ATP binding by UvrB and probably causes local melting of the DNA helix, facilitating insertion of UvrB beta-hairpin between the DNA strands. Then UvrB probes one DNA strand for the presence of a lesion. If a lesion is found the UvrA subunits dissociate and the UvrB-DNA preincision complex is formed. This complex is subsequently bound by UvrC and the second UvrB is released. If no lesion is found, the DNA wraps around the other UvrB subunit that will check the other stand for damage. This Streptococcus pyogenes serotype M18 (strain MGAS8232) protein is UvrABC system protein B.